A 344-amino-acid polypeptide reads, in one-letter code: Arginine N-succinyltransferase (344 aa).

Leu-125 lines the succinyl-CoA pocket. Catalysis depends on His-229, which acts as the Proton donor.

The protein belongs to the arginine N-succinyltransferase family.

It carries out the reaction succinyl-CoA + L-arginine = N(2)-succinyl-L-arginine + CoA + H(+). It functions in the pathway amino-acid degradation; L-arginine degradation via AST pathway; L-glutamate and succinate from L-arginine: step 1/5. Catalyzes the transfer of succinyl-CoA to arginine to produce N(2)-succinylarginine. In Shigella boydii serotype 18 (strain CDC 3083-94 / BS512), this protein is Arginine N-succinyltransferase.